A 148-amino-acid chain; its full sequence is Snaclec B4 (148 aa).

Positions 1–24 (MGRIIFVSFGLLVVFLSLSGTGAA) are cleaved as a signal peptide. Intrachain disulfides connect cysteine 27-cysteine 38, cysteine 55-cysteine 144, and cysteine 121-cysteine 136. One can recognise a C-type lectin domain in the interval 34–145 (YDQHCYKVFD…CRLLGHFVCK (112 aa)).

Belongs to the snaclec family. As to quaternary structure, heterodimer; disulfide-linked. In terms of tissue distribution, expressed by the venom gland.

The protein resides in the secreted. In terms of biological role, interferes with one step of hemostasis (modulation of platelet aggregation, or coagulation cascade, for example). The protein is Snaclec B4 of Macrovipera lebetinus (Levantine viper).